The chain runs to 130 residues: Fluoride-specific ion channel FluC (130 aa).

The next 4 helical transmembrane spans lie at 3–23 (FVFL…YFVG), 38–58 (LGTF…GHLA), 67–87 (FGIF…SYGL), and 102–122 (ISYV…GWFL). Na(+)-binding residues include Gly-77 and Thr-80.

Belongs to the fluoride channel Fluc/FEX (TC 1.A.43) family.

The protein localises to the cell inner membrane. The enzyme catalyses fluoride(in) = fluoride(out). Na(+) is not transported, but it plays an essential structural role and its presence is essential for fluoride channel function. Functionally, fluoride-specific ion channel. Important for reducing fluoride concentration in the cell, thus reducing its toxicity. The chain is Fluoride-specific ion channel FluC from Helicobacter pylori (strain G27).